Consider the following 240-residue polypeptide: Arylmalonate decarboxylase (240 aa).

It carries out the reaction 2-aryl-2-methylmalonate + H(+) = 2-arylpropionate + CO2. The polypeptide is Arylmalonate decarboxylase (Bordetella bronchiseptica (Alcaligenes bronchisepticus)).